Consider the following 474-residue polypeptide: Synaptotagmin-17 (474 aa).

The tract at residues 60–112 is disordered; the sequence is WLMASRSSDKDGDSVHTASEVPLTPRTNSPDGRRSSSDTSKSTYSLTRRISSL. A compositionally biased stretch (low complexity) spans 96 to 112; sequence SDTSKSTYSLTRRISSL. Phosphoserine occurs at positions 118 and 119. C2 domains are found at residues 184–310 and 321–455; these read QLGM…HWWK and ELGE…EQWH.

It belongs to the synaptotagmin family. In terms of tissue distribution, expressed abundantly in brain (frontal and temporal lobes, hippocampus, hypothalamus, amygdala, substantia nigra, and pituitary), kidney, and prostate. Expressed in fetal brain, kidney and lung. Expressed in melanocytes.

The protein resides in the membrane. Its function is as follows. Plays a role in dendrite formation by melanocytes. The chain is Synaptotagmin-17 (SYT17) from Homo sapiens (Human).